Reading from the N-terminus, the 375-residue chain is Alcohol dehydrogenase 1 (375 aa).

Residue S2 is modified to N-acetylserine. Zn(2+)-binding residues include C47, H68, C98, C101, C104, C112, and C175. NAD(+) contacts are provided by residues 200–205 (WSGRVG), D224, and K229. K234 bears the N6-succinyllysine mark. 293-295 (VGV) lines the NAD(+) pocket. The residue at position 340 (K340) is an N6-succinyllysine. Position 370 (R370) interacts with NAD(+).

The protein belongs to the zinc-containing alcohol dehydrogenase family. Class-I subfamily. As to quaternary structure, homodimer. Zn(2+) is required as a cofactor.

It is found in the cytoplasm. It catalyses the reaction a primary alcohol + NAD(+) = an aldehyde + NADH + H(+). It carries out the reaction a secondary alcohol + NAD(+) = a ketone + NADH + H(+). The polypeptide is Alcohol dehydrogenase 1 (ADH1) (Geomys knoxjonesi (Jones' pocket gopher)).